Here is a 239-residue protein sequence, read N- to C-terminus: tRNA (guanine-N(7)-)-methyltransferase (239 aa).

The segment covering 1–13 (MEAEVQQGQQSPE) has biased composition (polar residues). The tract at residues 1–30 (MEAEVQQGQQSPEGQLEKRPPSPPWAGIPL) is disordered. Positions 72, 97, 124, and 147 each coordinate S-adenosyl-L-methionine. Asp-147 is an active-site residue. Residues Lys-151 and Asp-183 each coordinate substrate.

Belongs to the class I-like SAM-binding methyltransferase superfamily. TrmB family.

It catalyses the reaction guanosine(46) in tRNA + S-adenosyl-L-methionine = N(7)-methylguanosine(46) in tRNA + S-adenosyl-L-homocysteine. The protein operates within tRNA modification; N(7)-methylguanine-tRNA biosynthesis. Catalyzes the formation of N(7)-methylguanine at position 46 (m7G46) in tRNA. In Synechococcus sp. (strain JA-2-3B'a(2-13)) (Cyanobacteria bacterium Yellowstone B-Prime), this protein is tRNA (guanine-N(7)-)-methyltransferase.